A 464-amino-acid chain; its full sequence is MILANAFCLFFFLDETLRSLASPSSPQGPELHGWRPPVDCVRANELCAAESNCSSRYRTLRQCLAGRDRNTMLANKECQAALEVLQESPLYDCRCKRGMKKELQCLQIYWSIHLGLTEGEEFYEASPYEPVTARLSDIFRLASIFSGTGADPAVSTKSNHCLDAAKACNLNDNCKKLRSSYISICNREISPTERCNRRKCHKALRQFFDRVPSEYTYRMLFCSCQDQACAERRRQTILPSCSYEDKEKPNCLDLRSLCRTDHLCRSRLADFHANCRASYQTLTSCPTDNYQACLGSYAGMIGFDITPNYVDSSPTGIVVSPWCSCRGSGNMEEECEKFLKDFTENPCLRNAIQAFGNGTDVNLSPKSPPFQATQAPRVDKTPSLPDDLSDSTSLGTSVISTCTSVQDQGLKANNSKELSMCFTELTTNIIPGSKRVIKPNSGPRRTRPSAALTAASFLMLKLAL.

The signal sequence occupies residues 1–21 (MILANAFCLFFFLDETLRSLA). 14 disulfide bridges follow: cysteine 40–cysteine 93, cysteine 47–cysteine 53, cysteine 63–cysteine 78, cysteine 95–cysteine 105, cysteine 161–cysteine 222, cysteine 168–cysteine 174, cysteine 185–cysteine 200, cysteine 195–cysteine 241, cysteine 224–cysteine 229, cysteine 251–cysteine 323, cysteine 258–cysteine 264, cysteine 275–cysteine 293, cysteine 285–cysteine 347, and cysteine 325–cysteine 335. N-linked (GlcNAc...) asparagine glycosylation is present at asparagine 52. N-linked (GlcNAc...) asparagine glycosylation is present at asparagine 357. Positions 360-374 (DVNLSPKSPPFQATQ) are enriched in polar residues. The disordered stretch occupies residues 360 to 392 (DVNLSPKSPPFQATQAPRVDKTPSLPDDLSDST). Residues 381 to 392 (TPSLPDDLSDST) show a composition bias toward low complexity. Asparagine 413 is a glycosylation site (N-linked (GlcNAc...) asparagine). Asparagine 440 is lipidated: GPI-anchor amidated asparagine. Positions 441–464 (SGPRRTRPSAALTAASFLMLKLAL) are cleaved as a propeptide — removed in mature form.

The protein belongs to the GDNFR family. Interacts with NRTN ligand and RET: forms a 2:2:2 ternary complex composed of NRTN ligand, GFRA2 and RET receptor. Also forms a 4:4:4 tetrameric complex composed of 4 copies of NRTN ligand, GFRA2 and RET receptor, which prevents endocytosis of RET. Interacts with SORL1.

It localises to the cell membrane. Functionally, receptor for neurturin (NRTN), a growth factor that supports the survival of sympathetic neurons. NRTN-binding leads to autophosphorylation and activation of the RET receptor. Also able to mediate GDNF signaling through the RET tyrosine kinase receptor. This is GDNF family receptor alpha-2 (GFRA2) from Bos taurus (Bovine).